A 590-amino-acid chain; its full sequence is ATP-dependent zinc metalloprotease FtsH 1 (590 aa).

The Cytoplasmic portion of the chain corresponds to 1 to 8 (MLKLTKKQ). The chain crosses the membrane as a helical span at residues 9-29 (LIIVLGIAIVVVSAIGYAVYT). At 30-103 (QYFNEDKLEI…QVRETTDQYS (74 aa)) the chain is on the extracellular side. Residues 104-124 (VVQVITFVVLIGGFIGVAIFL) form a helical membrane-spanning segment. At 125–590 (SKKNATQTSK…NEIFSGFQSM (466 aa)) the chain is on the cytoplasmic side. Position 195 to 202 (195 to 202 (GSPGTGKT)) interacts with ATP. Zn(2+) is bound at residue H418. E419 is a catalytic residue. 2 residues coordinate Zn(2+): H422 and D496.

The protein in the central section; belongs to the AAA ATPase family. It in the C-terminal section; belongs to the peptidase M41 family. Homohexamer. The cofactor is Zn(2+).

It is found in the cell membrane. Functionally, acts as a processive, ATP-dependent zinc metallopeptidase for both cytoplasmic and membrane proteins. Plays a role in the quality control of integral membrane proteins. In Alkaliphilus metalliredigens (strain QYMF), this protein is ATP-dependent zinc metalloprotease FtsH 1.